The chain runs to 486 residues: Adenosylhomocysteinase (486 aa).

3 residues coordinate substrate: T63, D147, and E209. An NAD(+)-binding site is contributed by 210–212 (TTT). Positions 239 and 243 each coordinate substrate. Residues N244, 273-278 (GYGDVG), E296, N331, 352-354 (IGH), and N400 contribute to the NAD(+) site.

Belongs to the adenosylhomocysteinase family. NAD(+) serves as cofactor.

The catalysed reaction is S-adenosyl-L-homocysteine + H2O = L-homocysteine + adenosine. It functions in the pathway amino-acid biosynthesis; L-homocysteine biosynthesis; L-homocysteine from S-adenosyl-L-homocysteine: step 1/1. Adenosylhomocysteine is a competitive inhibitor of S-adenosyl-L-methionine-dependent methyl transferase reactions; therefore adenosylhomocysteinase may play a key role in the control of methylations via regulation of the intracellular concentration of adenosylhomocysteine. The chain is Adenosylhomocysteinase from Trichomonas vaginalis.